Reading from the N-terminus, the 204-residue chain is Large ribosomal subunit protein uL4 (204 aa).

Residues 47–69 form a disordered region; the sequence is KAQKNRAAVSGGGKKPWRQKGTG.

The protein belongs to the universal ribosomal protein uL4 family. In terms of assembly, part of the 50S ribosomal subunit.

Its function is as follows. One of the primary rRNA binding proteins, this protein initially binds near the 5'-end of the 23S rRNA. It is important during the early stages of 50S assembly. It makes multiple contacts with different domains of the 23S rRNA in the assembled 50S subunit and ribosome. Functionally, forms part of the polypeptide exit tunnel. The protein is Large ribosomal subunit protein uL4 of Teredinibacter turnerae (strain ATCC 39867 / T7901).